The sequence spans 53 residues: UPF0391 membrane protein Bxeno_A1464 (53 aa).

The next 2 helical transmembrane spans lie at 5–25 (AAIFFIIAIIAAVFGFGGIAA) and 30–50 (IAKVLFFIFVVIFLVTLLMGV).

This sequence belongs to the UPF0391 family.

The protein localises to the cell membrane. The sequence is that of UPF0391 membrane protein Bxeno_A1464 from Paraburkholderia xenovorans (strain LB400).